The primary structure comprises 86 residues: MRKDIHPDYRPVVFLDTTTGYKFLSGSTKASKETIEFEGETYPLVRVEISSDSHPFYTGRQKFTQADGRVDRFNKKYGLKDANAAK.

This sequence belongs to the bacterial ribosomal protein bL31 family. Type B subfamily. Part of the 50S ribosomal subunit.

The polypeptide is Large ribosomal subunit protein bL31B (Streptococcus equi subsp. zooepidemicus (strain H70)).